Reading from the N-terminus, the 292-residue chain is Elongation factor Ts (292 aa).

An involved in Mg(2+) ion dislocation from EF-Tu region spans residues 82 to 85 (TDFV).

It belongs to the EF-Ts family.

The protein resides in the cytoplasm. Its function is as follows. Associates with the EF-Tu.GDP complex and induces the exchange of GDP to GTP. It remains bound to the aminoacyl-tRNA.EF-Tu.GTP complex up to the GTP hydrolysis stage on the ribosome. The protein is Elongation factor Ts of Bordetella avium (strain 197N).